A 396-amino-acid chain; its full sequence is Ornithine aminotransferase (396 aa).

An N6-(pyridoxal phosphate)lysine modification is found at K255.

The protein belongs to the class-III pyridoxal-phosphate-dependent aminotransferase family. OAT subfamily. Pyridoxal 5'-phosphate is required as a cofactor.

It is found in the cytoplasm. It carries out the reaction a 2-oxocarboxylate + L-ornithine = L-glutamate 5-semialdehyde + an L-alpha-amino acid. Its pathway is amino-acid biosynthesis; L-proline biosynthesis; L-glutamate 5-semialdehyde from L-ornithine: step 1/1. In terms of biological role, catalyzes the interconversion of ornithine to glutamate semialdehyde. The polypeptide is Ornithine aminotransferase (Staphylococcus epidermidis (strain ATCC 35984 / DSM 28319 / BCRC 17069 / CCUG 31568 / BM 3577 / RP62A)).